The sequence spans 146 residues: MAAYLLAVAILFCIQGWPSGTVQGQVMPFMEVYSRSACQTRETLVPILKEYPDEVSHLFKPSCVPVLRCGGCCSDESLTCTATGKHSVGREIMRVDPHKGTSKMEVMQFKEHTACECRPRSPGDVNNGKDKRNPEEGGPRARFPFV.

The first 24 residues, 1–24 (MAAYLLAVAILFCIQGWPSGTVQG), serve as a signal peptide directing secretion. Gln-25 is modified (pyrrolidone carboxylic acid). 3 disulfides stabilise this stretch: Cys-38/Cys-80, Cys-69/Cys-115, and Cys-73/Cys-117. Residues 118–139 (RPRSPGDVNNGKDKRNPEEGGP) are compositionally biased toward basic and acidic residues. The segment at 118 to 146 (RPRSPGDVNNGKDKRNPEEGGPRARFPFV) is disordered.

This sequence belongs to the PDGF/VEGF growth factor family. Snake venom VEGF subfamily. Homodimer; disulfide-linked. Interacts with VEGF receptor-1 (FLT1) with a high affinity, whereas it binds to VEGF receptor-2 (KDR) with a low affinity. Does not bind VEGF receptor-3 (FLT4). As to expression, expressed by the venom gland.

It is found in the secreted. Its function is as follows. Snake venom VEGFs may contribute to venom dispersion and prey subjugation by inducing vascular permeability and hypotension. This protein strongly increases vascular permeability, and weakly stimulates angiogenesis. Interacts with VEGF receptor-1 (FLT1) with a high affinity, whereas it binds to VEGF receptor-2 (KDR) with a low affinity. Stimulates autophosphorylation of VEGF receptor-1 (VEGFR-1/FLT1), and VEGF receptor-2 (VEGFR-2/KDR). This is Snake venom vascular endothelial growth factor toxin TfsvVEGF from Protobothrops flavoviridis (Habu).